A 253-amino-acid polypeptide reads, in one-letter code: MKTVNIRGVILGEGIPKVCTPLVGRSLKELREEINLLKDIDCDLVEFRADFFEHVENIQKVKEVLLEIREALKEKPILFTFRSAKEGGEREVESEFYCKLNKEIIKTKLIDAIDIELFNEEESILELIKIAHDEDVKVVMSNHDFHKTPPKEEMISRLVKMQELGADVTKIAVMPKGSSDVLTLLEATNDMKIKYAKTPFITMSMKGVGMISRISGEVFGSAVTFGASKKASAPGQLQVKELKEILNVVHNVL.

3-dehydroquinate contacts are provided by residues 46–48 and Arg-82; that span reads EFR. Catalysis depends on His-143, which acts as the Proton donor/acceptor. Lys-170 acts as the Schiff-base intermediate with substrate in catalysis. Arg-213, Ser-232, and Gln-236 together coordinate 3-dehydroquinate.

It belongs to the type-I 3-dehydroquinase family. Homodimer.

It catalyses the reaction 3-dehydroquinate = 3-dehydroshikimate + H2O. It functions in the pathway metabolic intermediate biosynthesis; chorismate biosynthesis; chorismate from D-erythrose 4-phosphate and phosphoenolpyruvate: step 3/7. Involved in the third step of the chorismate pathway, which leads to the biosynthesis of aromatic amino acids. Catalyzes the cis-dehydration of 3-dehydroquinate (DHQ) and introduces the first double bond of the aromatic ring to yield 3-dehydroshikimate. The chain is 3-dehydroquinate dehydratase from Clostridium novyi (strain NT).